The sequence spans 259 residues: Type III pantothenate kinase (259 aa).

ATP is bound at residue 6–13 (DAGNTNIV). Residues tyrosine 100 and 107–110 (GADR) each bind substrate. The active-site Proton acceptor is the aspartate 109. Aspartate 129 is a binding site for K(+). Threonine 132 is a binding site for ATP. Threonine 184 contributes to the substrate binding site.

Belongs to the type III pantothenate kinase family. In terms of assembly, homodimer. It depends on NH4(+) as a cofactor. K(+) serves as cofactor.

It localises to the cytoplasm. The enzyme catalyses (R)-pantothenate + ATP = (R)-4'-phosphopantothenate + ADP + H(+). The protein operates within cofactor biosynthesis; coenzyme A biosynthesis; CoA from (R)-pantothenate: step 1/5. Its function is as follows. Catalyzes the phosphorylation of pantothenate (Pan), the first step in CoA biosynthesis. The polypeptide is Type III pantothenate kinase (Clostridium novyi (strain NT)).